A 351-amino-acid chain; its full sequence is Synaptonemal complex central element protein 1 (351 aa).

Over residues 1–10 the composition is skewed to polar residues; the sequence is MAGRSLTSKA. 2 disordered regions span residues 1 to 31 and 267 to 351; these read MAGRSLTSKAEPTAGAVDRAEKAGGQDTSSQ and KCQQ…KELF. A coiled-coil region spans residues 52-290; it reads RVEVLINRIN…ELEKHGMQVP (239 aa).

The protein belongs to the SYCE family. Homodimer. Found in a complex with SYCP1 and SYCE2. Interacts with SYCP1, SYCE2 and SYCE3. Interacts with SIX6OS1.

It is found in the nucleus. Its subcellular location is the chromosome. In terms of biological role, major component of the transverse central element of synaptonemal complexes (SCS), formed between homologous chromosomes during meiotic prophase. Requires SYCP1 in order to be incorporated into the central element. May have a role in the synaptonemal complex assembly, stabilization and recombination. The polypeptide is Synaptonemal complex central element protein 1 (SYCE1) (Homo sapiens (Human)).